The chain runs to 491 residues: Glutamate--tRNA ligase (491 aa).

The 'HIGH' region motif lies at 13–23; it reads PSPTGFLHIGN. Residues Cys110, Cys112, Cys137, and His139 each contribute to the Zn(2+) site. Positions 254 to 258 match the 'KMSKS' region motif; that stretch reads KLSKR. Residue Lys257 participates in ATP binding.

It belongs to the class-I aminoacyl-tRNA synthetase family. Glutamate--tRNA ligase type 1 subfamily. Monomer. Zn(2+) is required as a cofactor.

Its subcellular location is the cytoplasm. It carries out the reaction tRNA(Glu) + L-glutamate + ATP = L-glutamyl-tRNA(Glu) + AMP + diphosphate. Its function is as follows. Catalyzes the attachment of glutamate to tRNA(Glu) in a two-step reaction: glutamate is first activated by ATP to form Glu-AMP and then transferred to the acceptor end of tRNA(Glu). This Listeria monocytogenes serovar 1/2a (strain ATCC BAA-679 / EGD-e) protein is Glutamate--tRNA ligase.